Consider the following 601-residue polypeptide: Elongation factor 4 (601 aa).

The region spanning 7-189 (ELIRNFSIIA…ALVTRLPPPK (183 aa)) is the tr-type G domain. Residues 19–24 (DHGKST) and 136–139 (NKID) each bind GTP.

Belongs to the TRAFAC class translation factor GTPase superfamily. Classic translation factor GTPase family. LepA subfamily.

The protein localises to the cell inner membrane. It catalyses the reaction GTP + H2O = GDP + phosphate + H(+). Required for accurate and efficient protein synthesis under certain stress conditions. May act as a fidelity factor of the translation reaction, by catalyzing a one-codon backward translocation of tRNAs on improperly translocated ribosomes. Back-translocation proceeds from a post-translocation (POST) complex to a pre-translocation (PRE) complex, thus giving elongation factor G a second chance to translocate the tRNAs correctly. Binds to ribosomes in a GTP-dependent manner. This Acidiphilium cryptum (strain JF-5) protein is Elongation factor 4.